The sequence spans 281 residues: Phosphoglycerate mutase-like protein AT74H (281 aa).

Residue H17 is the Tele-phosphohistidine intermediate of the active site. E109 acts as the Proton donor/acceptor in catalysis.

It belongs to the phosphoglycerate mutase family.

Its function is as follows. May play a role in carbohydrates metabolism. This is Phosphoglycerate mutase-like protein AT74H from Arabidopsis thaliana (Mouse-ear cress).